Here is a 745-residue protein sequence, read N- to C-terminus: Inhibitor of nuclear factor kappa-B kinase subunit alpha (745 aa).

In terms of domain architecture, Protein kinase spans 15–300 (WEMRERLGTG…IDLTLKQPRC (286 aa)). Residues 21–29 (LGTGGFGNV) and Lys-44 contribute to the ATP site. Thr-23 carries the phosphothreonine; by PKB/AKT1 and SGK1 modification. Catalysis depends on Asp-144, which acts as the Proton acceptor. Position 176 is a phosphoserine; by MAP3K14 (Ser-176). Ser-180 is subject to Phosphoserine; by SGK1. Residues 455 to 476 (LLRYNANLTKMKNTLISASQQL) are leucine-zipper. Residues 738 to 743 (LDWSWL) form an NEMO-binding region.

It belongs to the protein kinase superfamily. Ser/Thr protein kinase family. I-kappa-B kinase subfamily. In terms of assembly, component of the I-kappa-B-kinase (IKK) core complex consisting of CHUK, IKBKB and IKBKG; probably four alpha/CHUK-beta/IKBKB dimers are associated with four gamma/IKBKG subunits. The IKK core complex seems to associate with regulatory or adapter proteins to form a IKK-signalosome holo-complex. The IKK complex associates with TERF2IP/RAP1, leading to promote IKK-mediated phosphorylation of RELA/p65. Part of a complex composed of NCOA2, NCOA3, CHUK/IKKA, IKBKB, IKBKG and CREBBP. Part of a 70-90 kDa complex at least consisting of CHUK/IKKA, IKBKB, NFKBIA, RELA, ELP1 and MAP3K14. Directly interacts with TRPC4AP. May interact with TRAF2. Interacts with NALP2. May interact with MAVS/IPS1. Interacts with ARRB1 and ARRB2. Interacts with NLRC5; prevents CHUK phosphorylation and kinase activity. Interacts with PIAS1; this interaction induces PIAS1 phosphorylation. Interacts with ZNF268 isoform 2; the interaction is further increased in a TNF-alpha-dependent manner. Interacts with LRRC14. Interacts with SASH1. Directly interacts with DDX3X after the physiological activation of the TLR7 and TLR8 pathways; this interaction enhances CHUK autophosphorylation. Ubiquitinated by TRIM56 via 'Lys-63'-linked ubiquitination, promoting activation of CHUK/IKKA. In terms of processing, phosphorylated by MAP3K14/NIK, AKT and to a lesser extent by MEKK1, and dephosphorylated by PP2A. Autophosphorylated. As to expression, ubiquitous only for isoform 1, isoforms 2 and 3 are expressed predominantly in brain and T-lymphocytes.

It is found in the cytoplasm. Its subcellular location is the nucleus. It catalyses the reaction L-seryl-[I-kappa-B protein] + ATP = O-phospho-L-seryl-[I-kappa-B protein] + ADP + H(+). With respect to regulation, activated when phosphorylated and inactivated when dephosphorylated. In terms of biological role, serine kinase that plays an essential role in the NF-kappa-B signaling pathway which is activated by multiple stimuli such as inflammatory cytokines, bacterial or viral products, DNA damages or other cellular stresses. Acts as a part of the canonical IKK complex in the conventional pathway of NF-kappa-B activation and phosphorylates inhibitors of NF-kappa-B on serine residues. These modifications allow polyubiquitination of the inhibitors and subsequent degradation by the proteasome. In turn, free NF-kappa-B is translocated into the nucleus and activates the transcription of hundreds of genes involved in immune response, growth control, or protection against apoptosis. Negatively regulates the pathway by phosphorylating the scaffold protein TAXBP1 and thus promoting the assembly of the A20/TNFAIP3 ubiquitin-editing complex (composed of A20/TNFAIP3, TAX1BP1, and the E3 ligases ITCH and RNF11). Therefore, CHUK plays a key role in the negative feedback of NF-kappa-B canonical signaling to limit inflammatory gene activation. As part of the non-canonical pathway of NF-kappa-B activation, the MAP3K14-activated CHUK/IKKA homodimer phosphorylates NFKB2/p100 associated with RelB, inducing its proteolytic processing to NFKB2/p52 and the formation of NF-kappa-B RelB-p52 complexes. In turn, these complexes regulate genes encoding molecules involved in B-cell survival and lymphoid organogenesis. Also participates in the negative feedback of the non-canonical NF-kappa-B signaling pathway by phosphorylating and destabilizing MAP3K14/NIK. Within the nucleus, phosphorylates CREBBP and consequently increases both its transcriptional and histone acetyltransferase activities. Modulates chromatin accessibility at NF-kappa-B-responsive promoters by phosphorylating histones H3 at 'Ser-10' that are subsequently acetylated at 'Lys-14' by CREBBP. Additionally, phosphorylates the CREBBP-interacting protein NCOA3. Also phosphorylates FOXO3 and may regulate this pro-apoptotic transcription factor. Phosphorylates RIPK1 at 'Ser-25' which represses its kinase activity and consequently prevents TNF-mediated RIPK1-dependent cell death. Phosphorylates AMBRA1 following mitophagy induction, promoting AMBRA1 interaction with ATG8 family proteins and its mitophagic activity. This Mus musculus (Mouse) protein is Inhibitor of nuclear factor kappa-B kinase subunit alpha (Chuk).